Here is a 334-residue protein sequence, read N- to C-terminus: N-acetyl-gamma-glutamyl-phosphate reductase (334 aa).

Cys-149 is an active-site residue.

The protein belongs to the NAGSA dehydrogenase family. Type 1 subfamily.

The protein localises to the cytoplasm. The enzyme catalyses N-acetyl-L-glutamate 5-semialdehyde + phosphate + NADP(+) = N-acetyl-L-glutamyl 5-phosphate + NADPH + H(+). Its pathway is amino-acid biosynthesis; L-arginine biosynthesis; N(2)-acetyl-L-ornithine from L-glutamate: step 3/4. Catalyzes the NADPH-dependent reduction of N-acetyl-5-glutamyl phosphate to yield N-acetyl-L-glutamate 5-semialdehyde. In Sulfurimonas denitrificans (strain ATCC 33889 / DSM 1251) (Thiomicrospira denitrificans (strain ATCC 33889 / DSM 1251)), this protein is N-acetyl-gamma-glutamyl-phosphate reductase.